An 87-amino-acid polypeptide reads, in one-letter code: MTILASISSIGNVKSISKSNNVSLSNSSSSLQSMNSIQCGGCGNGGLLGAVGGLVGGVLTGTGVIVGSVLHGVGSILTGGSNNCGCN.

The protein belongs to the hssA/B family.

The chain is HssA/B-like protein 18 (hssl18) from Dictyostelium discoideum (Social amoeba).